A 349-amino-acid polypeptide reads, in one-letter code: NADH-ubiquinone oxidoreductase chain 2 (349 aa).

The next 10 helical transmembrane spans lie at 3–23 (PYVL…TFAS), 25–45 (HWLL…PIMA), 66–86 (AAAM…EWEI), 98–118 (VMLA…LPEV), 149–171 (INSS…GGLN), 178–197 (ILAY…LQYA), 202–219 (LLSL…FLTL), 240–260 (LAAL…LSGF), 274–294 (GLPL…YFYL), and 319–339 (FTLI…LLPL).

It belongs to the complex I subunit 2 family.

Its subcellular location is the mitochondrion inner membrane. The enzyme catalyses a ubiquinone + NADH + 5 H(+)(in) = a ubiquinol + NAD(+) + 4 H(+)(out). Its function is as follows. Core subunit of the mitochondrial membrane respiratory chain NADH dehydrogenase (Complex I) that is believed to belong to the minimal assembly required for catalysis. Complex I functions in the transfer of electrons from NADH to the respiratory chain. The immediate electron acceptor for the enzyme is believed to be ubiquinone. The sequence is that of NADH-ubiquinone oxidoreductase chain 2 (MT-ND2) from Salmo salar (Atlantic salmon).